We begin with the raw amino-acid sequence, 515 residues long: Monocarboxylate transporter 10 (515 aa).

Residues 1 to 48 form a disordered region; it reads MVLSQEEPDSARGTSEAQPLGPAPTGAAPPPGPGPSDSPEAAVEKVEV. The Cytoplasmic portion of the chain corresponds to 1–66; it reads MVLSQEEPDS…EPHEPPEPPE (66 aa). A compositionally biased stretch (low complexity) spans 17–26; the sequence is AQPLGPAPTG. Pro residues predominate over residues 27–36; that stretch reads AAPPPGPGPS. Residues 67–87 traverse the membrane as a helical segment; the sequence is GGWGWLVMLAAMWCNGSVFGI. Over 88 to 114 the chain is Extracellular; it reads QNACGVLFVSMLETFGSKDDDKMVFKT. A helical membrane pass occupies residues 115-135; it reads AWVGSLSMGMIFFCCPIVSVF. The Cytoplasmic portion of the chain corresponds to 136 to 144; sequence TDLFGCRKT. The chain crosses the membrane as a helical span at residues 145–165; sequence AVVGAAVGFVGLMSSSFVSSI. Residues 166 to 171 lie on the Extracellular side of the membrane; it reads EPLYLT. Residues 172–192 traverse the membrane as a helical segment; sequence YGIIFACGCSFAYQPSLVILG. Residues 193 to 200 lie on the Cytoplasmic side of the membrane; it reads HYFKKRLG. Residues 201–221 traverse the membrane as a helical segment; the sequence is LVNGIVTAGSSVFTILLPLLL. Residues 222 to 228 are Extracellular-facing; that stretch reads RVLIDSV. The chain crosses the membrane as a helical span at residues 229–249; sequence GLFYTLRVLCIFMFVLFLAGF. Residues 250–291 lie on the Cytoplasmic side of the membrane; sequence TYRPLATSTKDKESGGSGSSLFSRKKFSPPKKIFNFAIFKVT. Phosphoserine is present on serine 263. A helical membrane pass occupies residues 292 to 312; it reads AYAVWAVGIPLALFGYFVPYV. Over 313-329 the chain is Extracellular; it reads HLMKHVNERFQDEKNKE. The helical transmembrane segment at 330–350 threads the bilayer; the sequence is VVLMCIGVTSGVGRLLFGRIA. Residue aspartate 351 is a topological domain, cytoplasmic. The helical transmembrane segment at 352–372 threads the bilayer; that stretch reads YVPGVKKVYLQVLSFFFIGLM. The Extracellular segment spans residues 373–396; that stretch reads SMMIPLCSIFGALIAVCLIMGLFD. A helical transmembrane segment spans residues 397-417; that stretch reads GCFISIMAPIAFELVGAQDVS. The Cytoplasmic segment spans residues 418–419; it reads QA. The helical transmembrane segment at 420-440 threads the bilayer; it reads IGFLLGFMSIPMTVGPPIAGL. The Extracellular portion of the chain corresponds to 441-451; the sequence is LRDKLGSYDVA. Residues 452-472 traverse the membrane as a helical segment; it reads FYLAGVPPLIGGAVLCFIPWI. Over 473–515 the chain is Cytoplasmic; the sequence is HSKKQREISKTTGKEKMEKMLENQNSLLSSSSGMFKKESDSII. Phosphoserine is present on residues serine 498, serine 501, serine 503, and serine 504.

Belongs to the major facilitator superfamily. Monocarboxylate porter (TC 2.A.1.13) family. In terms of processing, not N-glycosylated. In terms of tissue distribution, strongly expressed in kidney and skeletal muscle and at lower level in placenta and heart.

The protein localises to the cell membrane. It is found in the basolateral cell membrane. The catalysed reaction is 3,3',5-triiodo-L-thyronine(out) = 3,3',5-triiodo-L-thyronine(in). It catalyses the reaction L-thyroxine(out) = L-thyroxine(in). It carries out the reaction L-tryptophan(in) = L-tryptophan(out). The enzyme catalyses L-tyrosine(in) = L-tyrosine(out). The catalysed reaction is L-phenylalanine(in) = L-phenylalanine(out). Functionally, sodium- and proton-independent thyroid hormones and aromatic acids transporter. Mediates both uptake and efflux of 3,5,3'-triiodothyronine (T3) and 3,5,3',5'-tetraiodothyronine (T4) with high affinity, suggesting a role in the homeostasis of thyroid hormone levels. Responsible for low affinity bidirectional transport of the aromatic amino acids, such as phenylalanine, tyrosine, tryptophan and L-3,4-dihydroxyphenylalanine (L-dopa). Plays an important role in homeostasis of aromatic amino acids. This Homo sapiens (Human) protein is Monocarboxylate transporter 10 (SLC16A10).